The sequence spans 327 residues: Metaxin-1 homolog (327 aa).

A helical transmembrane segment spans residues 281–301; it reads IVAGVGAVLAMGAFAAWRGIY.

The protein belongs to the metaxin family. In terms of assembly, associates with the mitochondrial contact site and cristae organizing system (MICOS) complex (also known as MINOS or MitOS complex).

Its subcellular location is the mitochondrion outer membrane. Its function is as follows. Involved in transport of proteins into the mitochondrion. Essential for embryonic development. The sequence is that of Metaxin-1 homolog from Drosophila melanogaster (Fruit fly).